A 214-amino-acid polypeptide reads, in one-letter code: Adenylate kinase (214 aa).

An ATP-binding site is contributed by 10–15 (GAGKGT). The tract at residues 30-59 (STGDMLRAAIKAGTELGLNAKAVMDAGQLV) is NMP. AMP is bound by residues Thr31, Arg36, 57–59 (QLV), 85–88 (GFPR), and Gln92. Positions 122-159 (GRRVHSGSGRTYHVVFNPPKVEGKDDVTGEDLVIRADD) are LID. Residues Arg123 and 132 to 133 (TY) each bind ATP. Residues Arg156 and Arg167 each contribute to the AMP site. Position 200 (Gln200) interacts with ATP.

The protein belongs to the adenylate kinase family. Monomer.

The protein localises to the cytoplasm. The catalysed reaction is AMP + ATP = 2 ADP. Its pathway is purine metabolism; AMP biosynthesis via salvage pathway; AMP from ADP: step 1/1. In terms of biological role, catalyzes the reversible transfer of the terminal phosphate group between ATP and AMP. Plays an important role in cellular energy homeostasis and in adenine nucleotide metabolism. The sequence is that of Adenylate kinase from Aeromonas salmonicida (strain A449).